Here is a 282-residue protein sequence, read N- to C-terminus: UDP-3-O-acyl-N-acetylglucosamine deacetylase (282 aa).

Zn(2+) is bound by residues His81, His239, and Asp243. His266 serves as the catalytic Proton donor.

Belongs to the LpxC family. Zn(2+) serves as cofactor.

It carries out the reaction a UDP-3-O-[(3R)-3-hydroxyacyl]-N-acetyl-alpha-D-glucosamine + H2O = a UDP-3-O-[(3R)-3-hydroxyacyl]-alpha-D-glucosamine + acetate. It functions in the pathway glycolipid biosynthesis; lipid IV(A) biosynthesis; lipid IV(A) from (3R)-3-hydroxytetradecanoyl-[acyl-carrier-protein] and UDP-N-acetyl-alpha-D-glucosamine: step 2/6. Catalyzes the hydrolysis of UDP-3-O-myristoyl-N-acetylglucosamine to form UDP-3-O-myristoylglucosamine and acetate, the committed step in lipid A biosynthesis. This chain is UDP-3-O-acyl-N-acetylglucosamine deacetylase, found in Chlamydia pneumoniae (Chlamydophila pneumoniae).